A 314-amino-acid chain; its full sequence is MNLIFAKVLCLLAILVLMMLGSLIPVKISEADFDKSSRSRKILSLSNSFAGGVFLATCFNALLPAVREKFFDLLKIGNISTDYPLAETIMMVGFFLTVFVEQTVMTFRKEKPSFIDMETFNAGSDIGSDSEFESPFISANHGHNLYEGGHSHHSHSLNIKELSSSSPIRLFSLVFALSAHSVFEGLALGLQEDGNKLLSLFIGVVIHETLVAMALGVSMAKVNTHLKDAIKMAVLVSTMIPIGIVVGMAIQSAQNMASSIASALLQGIAGGTFIFVTFFEILVKELEEKNDRLLKVLFLVLGYTVLAVLVLFKW.

Topologically, residues 1–3 (MNL) are extracellular. A helical transmembrane segment spans residues 4-24 (IFAKVLCLLAILVLMMLGSLI). At 25–41 (PVKISEADFDKSSRSRK) the chain is on the cytoplasmic side. Residues 42-62 (ILSLSNSFAGGVFLATCFNAL) form a helical membrane-spanning segment. Residues 63 to 84 (LPAVREKFFDLLKIGNISTDYP) are Extracellular-facing. A helical transmembrane segment spans residues 85–105 (LAETIMMVGFFLTVFVEQTVM). Residues 106–169 (TFRKEKPSFI…KELSSSSPIR (64 aa)) are Cytoplasmic-facing. The helical transmembrane segment at 170–190 (LFSLVFALSAHSVFEGLALGL) threads the bilayer. Topologically, residues 191-196 (QEDGNK) are extracellular. Residues 197–217 (LLSLFIGVVIHETLVAMALGV) form a helical membrane-spanning segment. The Cytoplasmic portion of the chain corresponds to 218-229 (SMAKVNTHLKDA). The chain crosses the membrane as a helical span at residues 230 to 250 (IKMAVLVSTMIPIGIVVGMAI). Over 251 to 262 (QSAQNMASSIAS) the chain is Extracellular. The helical transmembrane segment at 263–283 (ALLQGIAGGTFIFVTFFEILV) threads the bilayer. Residues 284–292 (KELEEKNDR) are Cytoplasmic-facing. The helical transmembrane segment at 293-313 (LLKVLFLVLGYTVLAVLVLFK) threads the bilayer. Position 314 (Trp-314) is a topological domain, extracellular.

Belongs to the ZIP transporter (TC 2.A.5) family.

It localises to the cell membrane. The protein resides in the apical cell membrane. It carries out the reaction Zn(2+)(in) = Zn(2+)(out). Functionally, transporter for the divalent cation Zn(2+). Mediates the influx of Zn(2+) into cells from extracellular space. In Xenopus tropicalis (Western clawed frog), this protein is Zinc transporter ZIP3 (slc39a3).